A 614-amino-acid chain; its full sequence is Putative Na(+)/H(+) antiporter YjbQ (614 aa).

13 helical membrane passes run 3-23 (HTSV…PILL), 32-52 (VVVA…NLVV), 57-77 (WLQT…GLEI), 107-127 (IFVG…LAGF), 130-150 (NAFL…VPTL), 163-183 (IILL…AVFS), 193-213 (MWLL…GRVF), 225-244 (GTIQ…LVAL), 248-267 (LGAE…SLLS), 282-302 (GFLI…WTLF), 307-327 (ILIM…IPVM), 338-358 (IFAS…AATI), and 368-388 (NMSG…PICF). In terms of domain architecture, RCK N-terminal spans 401 to 519 (KKTITFIGAN…EQGISIFSIL (119 aa)). Residues 533–614 (PGVMKLLTNQ…VTDLKKTLEG (82 aa)) enclose the RCK C-terminal domain.

This sequence belongs to the monovalent cation:proton antiporter 2 (CPA2) transporter (TC 2.A.37) family.

It localises to the cell membrane. Its activity is regulated as follows. Binds cyclic di-AMP (c-di-AMP), which may regulate the transporter activity. Its function is as follows. Probable Na(+)/H(+) antiporter. The chain is Putative Na(+)/H(+) antiporter YjbQ from Bacillus subtilis (strain 168).